A 344-amino-acid chain; its full sequence is MGARKKRAPRRGSLGFSPRKRASRLVPRVKRWPEVDIGKPVPLAFLGYRAGMTHVFMVDDRPGRPTSGKEIFVPVTIVETPPMFVAAVRLYGYDPNRGRYSLGEAWAQPPPELELQRRISTLGSFDTDKMLKSLEERLDKAEDVRLIAASQPKLAGGLSKKKPDLLEIKVGGVSDVTKLFDYAKDVLGNLIAVNDVFEEGQLVDVIAVTKGKGFQGVIKRWGVKELPRWHKHRKGSRRIGARSHGRSTFWETPQAGQTGFHRRTEYNKRILMIDDDGYKVTPAGGFLRYGVVRSTFVMLSGSIPGTPKRPIVMRWAIRPPEWYLKLGVRKPEITYISLASKQGV.

The protein belongs to the universal ribosomal protein uL3 family. As to quaternary structure, part of the 50S ribosomal subunit. Forms a cluster with proteins L14 and L24e.

One of the primary rRNA binding proteins, it binds directly near the 3'-end of the 23S rRNA, where it nucleates assembly of the 50S subunit. The sequence is that of Large ribosomal subunit protein uL3 from Aeropyrum pernix (strain ATCC 700893 / DSM 11879 / JCM 9820 / NBRC 100138 / K1).